The primary structure comprises 984 residues: MORC family CW-type zinc finger protein 1 (984 aa).

The stretch at 284-353 (AFKDEVKKAE…RELKTARTLS (70 aa)) forms a coiled coil. The segment at 477–531 (AMGIPFIIQCDLCLKWRVLPSSTNYQEKEFFDIWICANNPNRLENSCHQVECLPS) adopts a CW-type zinc-finger fold. Zn(2+) contacts are provided by cysteine 486, cysteine 489, cysteine 512, and cysteine 523. Coiled coils occupy residues 737-761 (DVSLKQEKKEIPLLNQEKQELCNDV) and 900-934 (EISLGQCENKRKISEDKLKNLRIKLALLLQKLQLG).

The protein localises to the nucleus. Its function is as follows. Required for spermatogenesis. Essential for de novo DNA methylation and silencing of transposable elements in the male embryonic germ cells. The polypeptide is MORC family CW-type zinc finger protein 1 (Homo sapiens (Human)).